The sequence spans 427 residues: uncharacterized protein (427 aa).

A run of 3 helical transmembrane segments spans residues Leu-10 to Trp-30, Lys-43 to Ala-63, and Ile-71 to Ser-91. At Thr-199 the chain carries Phosphothreonine. Ser-234 is subject to Phosphoserine. Transmembrane regions (helical) follow at residues Asn-253–Leu-273, Phe-288–Gly-308, Leu-327–Ile-347, Ile-358–Ile-378, and Ile-397–Ala-417.

The protein belongs to the auxin efflux carrier (TC 2.A.69) family.

It localises to the membrane. This is an uncharacterized protein from Saccharomyces cerevisiae (strain ATCC 204508 / S288c) (Baker's yeast).